Reading from the N-terminus, the 432-residue chain is Probable protein phosphatase 2C 33 (432 aa).

A PPM-type phosphatase domain is found at 27-298 (GGGSERPLVR…DDTTCVVVDI (272 aa)). Mn(2+)-binding residues include aspartate 74, glycine 75, aspartate 250, and aspartate 289.

It belongs to the PP2C family. Mg(2+) serves as cofactor. Mn(2+) is required as a cofactor.

The enzyme catalyses O-phospho-L-seryl-[protein] + H2O = L-seryl-[protein] + phosphate. It catalyses the reaction O-phospho-L-threonyl-[protein] + H2O = L-threonyl-[protein] + phosphate. The protein is Probable protein phosphatase 2C 33 of Oryza sativa subsp. japonica (Rice).